We begin with the raw amino-acid sequence, 592 residues long: Probable translation initiation factor IF-2 (592 aa).

Residues Ile5–Arg226 form the tr-type G domain. A G1 region spans residues Gly14–Thr21. Gly14–Thr21 lines the GTP pocket. Positions Met39 to His43 are G2. The segment at Asp80–Gly83 is G3. GTP contacts are provided by residues Asp80–His84 and Asn134–Asp137. Positions Asn134–Asp137 are G4. The G5 stretch occupies residues Ser202–Val204.

Belongs to the TRAFAC class translation factor GTPase superfamily. Classic translation factor GTPase family. IF-2 subfamily.

Function in general translation initiation by promoting the binding of the formylmethionine-tRNA to ribosomes. Seems to function along with eIF-2. This chain is Probable translation initiation factor IF-2, found in Pyrobaculum calidifontis (strain DSM 21063 / JCM 11548 / VA1).